The sequence spans 398 residues: Tryptophan synthase beta chain (398 aa).

Lys-87 carries the N6-(pyridoxal phosphate)lysine modification.

It belongs to the TrpB family. As to quaternary structure, tetramer of two alpha and two beta chains. It depends on pyridoxal 5'-phosphate as a cofactor.

The catalysed reaction is (1S,2R)-1-C-(indol-3-yl)glycerol 3-phosphate + L-serine = D-glyceraldehyde 3-phosphate + L-tryptophan + H2O. It functions in the pathway amino-acid biosynthesis; L-tryptophan biosynthesis; L-tryptophan from chorismate: step 5/5. Its function is as follows. The beta subunit is responsible for the synthesis of L-tryptophan from indole and L-serine. The polypeptide is Tryptophan synthase beta chain (Blochmanniella floridana).